The chain runs to 1048 residues: [F-actin]-monooxygenase MICAL1 (1048 aa).

The monooxygenase domain stretch occupies residues 1–489 (MASPASTNPA…QDLYDMMDKE (489 aa)). FAD is bound by residues Cys95, 114–116 (EKR), 121–123 (RHN), Phe181, Tyr293, and Asp393. Thr475 bears the Phosphothreonine mark. Positions 488–502 (KEHAQRKSDEPDSRK) are enriched in basic and acidic residues. Positions 488–508 (KEHAQRKSDEPDSRKTTTGSA) are disordered. The Calponin-homology (CH) domain occupies 507 to 611 (SAGTEELLHW…YLSHFHSAFK (105 aa)). Ser616 is modified (phosphoserine). The disordered stretch occupies residues 643–676 (TRAKVDEETPSTEEPPVSEPSMSPNTPELSEHQE). Low complexity predominate over residues 654-666 (TEEPPVSEPSMSP). The region spanning 681 to 743 (ELCELCGKHL…LQHLPQEDQK (63 aa)) is the LIM zinc-binding domain. Positions 683, 686, 704, 707, 710, 713, 733, and 736 each coordinate Zn(2+). Disordered stretches follow at residues 741-787 (DQKE…QPAR), 805-825 (IIPD…SDLA), and 839-873 (PVQA…PPLE). A compositionally biased stretch (polar residues) spans 747–765 (NNGSLESQELPTPGDSNMQ). Low complexity predominate over residues 772-787 (PVTRVSPVPSPSQPAR). Phosphoserine occurs at positions 777 and 781. Coiled coils occupy residues 847–867 (EAIE…EEEE), 906–949 (EEEM…ESSS), and 974–1031 (EEAE…VNQR). A compositionally biased stretch (acidic residues) spans 852–868 (GDDEEEEEEEEEEEEEP). The 144-residue stretch at 905–1048 (KEEEMKRFCK…EERRLREMPA (144 aa)) folds into the bMERB domain.

The protein belongs to the Mical family. Associates with the SH3 domain of NEDD9. Interacts with VIM and PLXNA3. Interacts with RAB1B, RAB8A, RAB10, RAB13 and RAB15 (in their GTP-bound forms); binding to RAB1B is of low affinity compared to other Rab proteins; at least in case of RAB8A and RAB10 can bind 2 molecules of the Rab proteins simultaneously. Interacts with STK38 and STK38L. Interacts with GRAF1/ARHGAP26, GRAF2/ARHGAP10, RAB8A, RAB8B and RAB10; may bind simultaneously to GRAFs and Rabs and connects GRAFs to Rabs. Does not interact with RAB1 and RAB11A. FAD serves as cofactor. In terms of tissue distribution, expressed in the postnatal and adult hippocampus; found in dentate gyrus, the polymorphic layer, cornu ammonis (CA) 1-3 and in mossy fibers of the striatum lucidum. In adult hippocampus strongly expressed in CA3 pyramidial neurons.

The protein resides in the cytoplasm. It localises to the cytoskeleton. Its subcellular location is the endosome membrane. The protein localises to the midbody. The catalysed reaction is L-methionyl-[F-actin] + NADPH + O2 + H(+) = L-methionyl-(R)-S-oxide-[F-actin] + NADP(+) + H2O. It catalyses the reaction NADPH + O2 + H(+) = H2O2 + NADP(+). Monooxygenase that promotes depolymerization of F-actin by mediating oxidation of specific methionine residues on actin to form methionine-sulfoxide, resulting in actin filament disassembly and preventing repolymerization. In the absence of actin, it also functions as a NADPH oxidase producing H(2)O(2). Acts as a cytoskeletal regulator that connects NEDD9 to intermediate filaments. Also acts as a negative regulator of apoptosis via its interaction with STK38 and STK38L; acts by antagonizing STK38 and STK38L activation by MST1/STK4. Involved in regulation of lamina-specific connectivity in the nervous system such as the development of lamina-restricted hippocampal connections. Through redox regulation of the actin cytoskeleton controls the intracellular distribution of secretory vesicles containing L1/neurofascin/NgCAM family proteins in neurons, thereby regulating their cell surface levels. May act as Rab effector protein and play a role in vesicle trafficking. Promotes endosomal tubule extension by associating with RAB8 (RAB8A or RAB8B), RAB10 and GRAF (GRAF1/ARHGAP26 or GRAF2/ARHGAP10) on the endosomal membrane which may connect GRAFs to Rabs, thereby participating in neosynthesized Rab8-Rab10-Rab11-dependent protein export. The chain is [F-actin]-monooxygenase MICAL1 (Mical1) from Mus musculus (Mouse).